The chain runs to 434 residues: Putative polysaccharide biosynthesis protein with aminopeptidase-like domain (434 aa).

Aminopeptidase-like stretches follow at residues 1–55 (MEEI…IHEV) and 57–355 (SGTK…IENN). An insert region spans residues 56 to 164 (KSGTKVFDWT…VVIDSSLEDG (109 aa)). Residues histidine 189, aspartate 195, and histidine 324 each coordinate Zn(2+). Residues 356–434 (RTYLNLNPKC…LYRVELLKLV (79 aa)) are permutated winged helix-turn-helix.

Belongs to the UPF0770 family. Homotrimer. Zn(2+) serves as cofactor.

Its function is as follows. The genomic context suggests a role in the biosynthesis of modified polysaccharides; this association with genes involved in carbohydrate metabolism is observed in several phylogenetically distinct taxa. Is not expected to have peptidase activity despite low similarity to aminopeptidases. This Clostridium acetobutylicum (strain ATCC 824 / DSM 792 / JCM 1419 / IAM 19013 / LMG 5710 / NBRC 13948 / NRRL B-527 / VKM B-1787 / 2291 / W) protein is Putative polysaccharide biosynthesis protein with aminopeptidase-like domain.